We begin with the raw amino-acid sequence, 423 residues long: Serine--tRNA ligase (423 aa).

228–230 (TSE) serves as a coordination point for L-serine. 259–261 (RLE) provides a ligand contact to ATP. Residue E282 coordinates L-serine. Position 346–349 (346–349 (EISS)) interacts with ATP. S384 lines the L-serine pocket.

Belongs to the class-II aminoacyl-tRNA synthetase family. Type-1 seryl-tRNA synthetase subfamily. Homodimer. The tRNA molecule binds across the dimer.

The protein resides in the cytoplasm. The enzyme catalyses tRNA(Ser) + L-serine + ATP = L-seryl-tRNA(Ser) + AMP + diphosphate + H(+). The catalysed reaction is tRNA(Sec) + L-serine + ATP = L-seryl-tRNA(Sec) + AMP + diphosphate + H(+). The protein operates within aminoacyl-tRNA biosynthesis; selenocysteinyl-tRNA(Sec) biosynthesis; L-seryl-tRNA(Sec) from L-serine and tRNA(Sec): step 1/1. In terms of biological role, catalyzes the attachment of serine to tRNA(Ser). Is also able to aminoacylate tRNA(Sec) with serine, to form the misacylated tRNA L-seryl-tRNA(Sec), which will be further converted into selenocysteinyl-tRNA(Sec). The protein is Serine--tRNA ligase of Ehrlichia canis (strain Jake).